The sequence spans 137 residues: Fluoride-specific ion channel FluC 2 (137 aa).

4 consecutive transmembrane segments (helical) span residues 3–23 (MGGSFVVLSGVIAIVVGSVLG), 44–64 (WGTMTINVTGAFLIGIFGALA), 76–96 (PWLFAVTGFLGCYTTVSSFSL), and 111–131 (LGNVAFSVGLCLAAVSCGFLL). 2 residues coordinate Na(+): Gly-86 and Thr-89.

Belongs to the fluoride channel Fluc/FEX (TC 1.A.43) family.

It localises to the cell inner membrane. The enzyme catalyses fluoride(in) = fluoride(out). With respect to regulation, na(+) is not transported, but it plays an essential structural role and its presence is essential for fluoride channel function. Its function is as follows. Fluoride-specific ion channel. Important for reducing fluoride concentration in the cell, thus reducing its toxicity. The polypeptide is Fluoride-specific ion channel FluC 2 (Bradyrhizobium diazoefficiens (strain JCM 10833 / BCRC 13528 / IAM 13628 / NBRC 14792 / USDA 110)).